The chain runs to 300 residues: GTPase Era (300 aa).

In terms of domain architecture, Era-type G spans 5 to 172 (HSGFVAIIGR…LTALTDALPV (168 aa)). Positions 13 to 20 (GRPNVGKS) are G1. 13–20 (GRPNVGKS) lines the GTP pocket. Positions 39-43 (QTTRN) are G2. Residues 60-63 (DTPG) form a G3 region. GTP contacts are provided by residues 60–64 (DTPGI) and 122–125 (NKID). The interval 122 to 125 (NKID) is G4. The interval 151-153 (ISA) is G5. The region spanning 203–280 (TRDEVPHAVA…NLKLWVRVQK (78 aa)) is the KH type-2 domain.

It belongs to the TRAFAC class TrmE-Era-EngA-EngB-Septin-like GTPase superfamily. Era GTPase family. Monomer.

The protein localises to the cytoplasm. It is found in the cell membrane. In terms of biological role, an essential GTPase that binds both GDP and GTP, with rapid nucleotide exchange. Plays a role in 16S rRNA processing and 30S ribosomal subunit biogenesis and possibly also in cell cycle regulation and energy metabolism. This chain is GTPase Era, found in Lacticaseibacillus paracasei (strain ATCC 334 / BCRC 17002 / CCUG 31169 / CIP 107868 / KCTC 3260 / NRRL B-441) (Lactobacillus paracasei).